The primary structure comprises 258 residues: Imidazole glycerol phosphate synthase subunit HisF (258 aa).

Active-site residues include D11 and D130.

It belongs to the HisA/HisF family. In terms of assembly, heterodimer of HisH and HisF.

It localises to the cytoplasm. The catalysed reaction is 5-[(5-phospho-1-deoxy-D-ribulos-1-ylimino)methylamino]-1-(5-phospho-beta-D-ribosyl)imidazole-4-carboxamide + L-glutamine = D-erythro-1-(imidazol-4-yl)glycerol 3-phosphate + 5-amino-1-(5-phospho-beta-D-ribosyl)imidazole-4-carboxamide + L-glutamate + H(+). It participates in amino-acid biosynthesis; L-histidine biosynthesis; L-histidine from 5-phospho-alpha-D-ribose 1-diphosphate: step 5/9. Its function is as follows. IGPS catalyzes the conversion of PRFAR and glutamine to IGP, AICAR and glutamate. The HisF subunit catalyzes the cyclization activity that produces IGP and AICAR from PRFAR using the ammonia provided by the HisH subunit. The chain is Imidazole glycerol phosphate synthase subunit HisF from Xanthomonas campestris pv. campestris (strain 8004).